A 157-amino-acid chain; its full sequence is Ribonuclease H (157 aa).

Positions Met-1–Ala-146 constitute an RNase H type-1 domain. Positions 9, 52, 74, and 138 each coordinate Mg(2+).

This sequence belongs to the RNase H family. As to quaternary structure, monomer. Mg(2+) is required as a cofactor.

The protein resides in the cytoplasm. It carries out the reaction Endonucleolytic cleavage to 5'-phosphomonoester.. In terms of biological role, endonuclease that specifically degrades the RNA of RNA-DNA hybrids. This chain is Ribonuclease H, found in Dinoroseobacter shibae (strain DSM 16493 / NCIMB 14021 / DFL 12).